The chain runs to 100 residues: Putative antiporter subunit mnhF2 (100 aa).

3 helical membrane-spanning segments follow: residues 5–25 (FTQI…LVCL), 38–60 (VVSF…VIFN), and 65–87 (LDSI…RFIG).

It belongs to the CPA3 antiporters (TC 2.A.63) subunit F family. In terms of assembly, may form a heterooligomeric complex that consists of seven subunits: mnhA2, mnhB2, mnhC2, mnhD2, mnhE2, mnhF2 and mnhG2.

The protein resides in the cell membrane. In Staphylococcus epidermidis (strain ATCC 35984 / DSM 28319 / BCRC 17069 / CCUG 31568 / BM 3577 / RP62A), this protein is Putative antiporter subunit mnhF2 (mnhF2).